The primary structure comprises 477 residues: Tripartite motif-containing protein 72 (477 aa).

Zn(2+)-binding residues include Cys14, Cys17, Cys29, His31, Cys34, Cys37, Cys53, Cys56, Cys86, His89, Cys97, Asp100, Cys105, Cys108, His114, and His117. The RING-type zinc finger occupies 14–57 (CPLCLQLFDAPVTAECGHSFCRACLIRVAGEPADDGTVACPCCQ). A B box-type zinc finger spans residues 81 to 122 (VPQGHCEEHLDPLSIYCEQDRTLVCGVCASLGSHRGHRLLPA). Residues 135 to 232 (QQKAQLQEAC…EKVLEEVADK (98 aa)) adopt a coiled-coil conformation. Cys144 bears the S-nitrosocysteine mark. Ser255 carries the phosphoserine modification. A B30.2/SPRY domain is found at 271–475 (DFKFQVWKKM…PLLLVGPDSE (205 aa)).

The protein belongs to the TRIM/RBCC family. As to quaternary structure, homodimer. Homooligomer; disulfide-linked. Oligomerizes on the phospholipid membrane. Interacts with DYSF and CAV3. Disulfide bond formation at Cys-242 occurs in case of membrane damage that cause the entry of the oxidized milieu of the extracellular space, resulting in homooligomerization. In terms of processing, S-nitrosylation at Cys-144 stabilizes TRIM72 and protects against oxidation-induced protein degradation and cell death.

It is found in the cell membrane. The protein resides in the sarcolemma. The protein localises to the cytoplasmic vesicle membrane. The catalysed reaction is S-ubiquitinyl-[E2 ubiquitin-conjugating enzyme]-L-cysteine + [acceptor protein]-L-lysine = [E2 ubiquitin-conjugating enzyme]-L-cysteine + N(6)-ubiquitinyl-[acceptor protein]-L-lysine.. It participates in protein modification; protein ubiquitination. Specifically binds phosphatidylserine. The binding to phospholipids enhances ubiquitination activity. Muscle-specific E3 ubiquitin-protein ligase that plays a central role in cell membrane repair by nucleating the assembly of the repair machinery at injury sites. Its ubiquitination activity is mediated by E2 ubiquitin-conjugating enzymes UBE2D1, UBE2D2 and UBE2D3. Acts as a sensor of oxidation: upon membrane damage, entry of extracellular oxidative environment results in disulfide bond formation and homooligomerization at the injury site. This oligomerization acts as a nucleation site for recruitment of TRIM72-containing vesicles to the injury site, leading to membrane patch formation. Probably acts upstream of the Ca(2+)-dependent membrane resealing process. Required for transport of DYSF to sites of cell injury during repair patch formation. Regulates membrane budding and exocytosis. May be involved in the regulation of the mobility of KCNB1-containing endocytic vesicles. This Rattus norvegicus (Rat) protein is Tripartite motif-containing protein 72.